The primary structure comprises 291 residues: 33 kDa chaperonin (291 aa).

2 disulfide bridges follow: cysteine 229/cysteine 231 and cysteine 262/cysteine 265.

This sequence belongs to the HSP33 family. Post-translationally, under oxidizing conditions two disulfide bonds are formed involving the reactive cysteines. Under reducing conditions zinc is bound to the reactive cysteines and the protein is inactive.

The protein localises to the cytoplasm. Redox regulated molecular chaperone. Protects both thermally unfolding and oxidatively damaged proteins from irreversible aggregation. Plays an important role in the bacterial defense system toward oxidative stress. The polypeptide is 33 kDa chaperonin (Vibrio vulnificus (strain YJ016)).